The chain runs to 308 residues: MQEIENLHQSVLLQEVLQAFTPLEEGILIDCTLGLGGHSKAILSQKPHLKLIGIDKDKFAQEIAKERLKEFEGRYNLLSGGFAKRFKEALEIHGERIKGVLVDLGVSSLQLDDDNRGFNFRSHALDMRMDLESELNAQKVINSYPVVALEKIFRDYGEIKEYKKIAHKIAERRAKKPFKDAKDLSEFLSSLSKNKKIHPATLVFQAVRIEVNSELEELKEFLQCARNLKEAILCVISFHSLEDALVKNAFKDYAKNCICDPSSFKCACSNNHALGAILTKKPITPSPEEIKNNRRSRSAKMRVFQFKP.

S-adenosyl-L-methionine is bound by residues 36-38 (GGH), Asp55, Phe82, Asp103, and Gln110.

Belongs to the methyltransferase superfamily. RsmH family.

Its subcellular location is the cytoplasm. It carries out the reaction cytidine(1402) in 16S rRNA + S-adenosyl-L-methionine = N(4)-methylcytidine(1402) in 16S rRNA + S-adenosyl-L-homocysteine + H(+). In terms of biological role, specifically methylates the N4 position of cytidine in position 1402 (C1402) of 16S rRNA. The polypeptide is Ribosomal RNA small subunit methyltransferase H (Helicobacter pylori (strain J99 / ATCC 700824) (Campylobacter pylori J99)).